Consider the following 853-residue polypeptide: DNA mismatch repair protein MutS (853 aa).

614 to 621 (GPNMGGKS) contributes to the ATP binding site.

Belongs to the DNA mismatch repair MutS family.

Its function is as follows. This protein is involved in the repair of mismatches in DNA. It is possible that it carries out the mismatch recognition step. This protein has a weak ATPase activity. The polypeptide is DNA mismatch repair protein MutS (Escherichia coli O157:H7 (strain EC4115 / EHEC)).